The sequence spans 247 residues: Chromosome partition protein MukE (247 aa).

Residues 213-247 (AQSLQEEKNGLKDNMDQSAVENEQYFENEENEGIA) form a disordered region. Residues 217-227 (QEEKNGLKDNM) are compositionally biased toward basic and acidic residues. Over residues 236 to 247 (QYFENEENEGIA) the composition is skewed to acidic residues.

This sequence belongs to the MukE family. As to quaternary structure, interacts, and probably forms a ternary complex, with MukF and MukB. The complex formation is stimulated by calcium or magnesium.

The protein resides in the cytoplasm. It is found in the nucleoid. Functionally, involved in chromosome condensation, segregation and cell cycle progression. May participate in facilitating chromosome segregation by condensation DNA from both sides of a centrally located replisome during cell division. Probably acts via its interaction with MukB and MukF. This Histophilus somni (strain 2336) (Haemophilus somnus) protein is Chromosome partition protein MukE.